Consider the following 112-residue polypeptide: UPF0342 protein SSA_1465 (112 aa).

Belongs to the UPF0342 family.

The sequence is that of UPF0342 protein SSA_1465 from Streptococcus sanguinis (strain SK36).